A 1372-amino-acid polypeptide reads, in one-letter code: MEATDQEVMLEGREDLMSTSATSSTNGGDTNGCGKKLSVTSPDPTPYVTKQRVTRPTPPAPSKNPMQFVQIKPCNLYQTAQEQLKKAEEVKKLKEVKKEEPEEWQNNLDNWKSSRRKRVEHIIDRAVETKKLELEEHDRLRRKSKTFTEMMEERAERGGPRGRAKLASLAVYNEDETNDLSDLGIGTSSASGKSSLSGDYDNNSVMSDHAAELDKAIGAASSVAAGVTAQNVDEQLNHINRNGSNGNHGNGAAVGQTGPSNSSKSAGRQYISSPGYDTSSSNAQASSPDLCEYTYEGAIQDYKQRVQRASSNGNGNANGKLIGEHIAYPTRRGSKIEDRLSGFEVTSPSDTQEGVEKQKVDVPKVDISKRKEIFEQAKAEVSNGGAPAAPKLVFRDGLTNGNSATTAPKSEVRRLSGDISSIRDRMQSLEQQRKAFSSSKSVDVPVPPLKQRLNSLQQSVAKEEQKKPPLVALIDARQLEIMRGEEERMRQQQQKEKHSPSQTTLCAPKPAPPALIIEEPPVADTNDDSGIQEDTADELQQQQQLNAAIAALALEERQLEEAANAVNQIEAEFDELTDLHPSPLPPSPALPAVQQSLQQPTVAQVPAQAVNQAAAPPLRDMEFSVSCTNNFIEPAKISPCDVNVVAASAVSVSKSGPTPNPTSTPNMVSSSPNCNLRRKPSNEMVHHRNLLKMFKETFQNDDDLKEVCEIVTSPGQFTQIIDFSKRPSNPPIPIPTLLPTSTPIPTQIPRPLGKPPMSPKAVRLASSPKGHINPLSSPTNSGFSPPQFSINGRVEIFNSRQLDKPPTPPAPPKKTVRSEHPLKEAVPSPEVVMCAPPMTIVDPDELPKPNTVKALSNCFSQSDSKSLTSPIMSPKPLPSGRIPQITPPASPKPPKRVQLDEVDRSSGDYAPVVGQTKAIVHTPPSKINARANQTLDPLAPNDSLCLHTSSPSEIPSLKACSPNESSLFKLASSRPTSPSVDVASCQKFLNREAPKDIQLAEEDRKRMDQFAVEEMPCDKIDVTKSPQPNTGFQIVTEDLVKKCDGKNISEAVRDLDVPPSQEDIALCAGLLDCLAPAQEPICDSIDVRNGPVPATGFQDISEEEVKKCEKHNKNYVITNRPSSPIGSVRAAHSKALMDTCEQIIAEERKASSQMMKTSLPESVEKPSTPLPGRKSKIPIPKPCCISASGTDSISRAGYVPTAPSHLSGSAQQPLIARTHVVETEIKVKEISPPSIPKTPEQTQLHASPTKEKKAKNIFDFLRRNFGHQEEPQHHSTLNETLEKKVVLTSTKSGVDVVNADEFVRVDNSKFYLASELEDVPVPPPLPKTPAPVNIEIRKKITTNEILEENTTEQALTQEISDLLDDEIMKLEN.

Residues 1 to 67 form a disordered region; it reads MEATDQEVML…PPAPSKNPMQ (67 aa). A compositionally biased stretch (polar residues) spans 17-28; sequence MSTSATSSTNGG. Residues 75–143 are a coiled coil; sequence NLYQTAQEQL…LEEHDRLRRK (69 aa). Disordered stretches follow at residues 178 to 199, 238 to 287, 380 to 414, 427 to 447, and 486 to 531; these read NDLSDLGIGTSSASGKSSLSGD, HINR…QASS, EVSNGGAPAAPKLVFRDGLTNGNSATTAPKSEVRR, QSLEQQRKAFSSSKSVDVPVP, and EERM…DSGI. 2 stretches are compositionally biased toward low complexity: residues 184-198 and 238-251; these read GIGTSSASGKSSLSG and HINRNGSNGNHGNG. Composition is skewed to polar residues over residues 257 to 287 and 399 to 408; these read TGPSNSSKSAGRQYISSPGYDTSSSNAQASS and TNGNSATTAP. Positions 409 to 438 form a coiled coil; it reads KSEVRRLSGDISSIRDRMQSLEQQRKAFSS. Positions 486–499 are enriched in basic and acidic residues; that stretch reads EERMRQQQQKEKHS. A compositionally biased stretch (low complexity) spans 514–523; that stretch reads ALIIEEPPVA. A coiled-coil region spans residues 539-580; sequence LQQQQQLNAAIAALALEERQLEEAANAVNQIEAEFDELTDLH. Over residues 652–673 the composition is skewed to low complexity; it reads VSKSGPTPNPTSTPNMVSSSPN. 5 disordered regions span residues 652–679, 799–820, 860–897, 1151–1181, and 1231–1250; these read VSKSGPTPNPTSTPNMVSSSPNCNLRRK, SRQLDKPPTPPAPPKKTVRSEH, SQSDSKSLTSPIMSPKPLPSGRIPQITPPASPKPPKRV, SSQMMKTSLPESVEKPSTPLPGRKSKIPIPK, and SPPSIPKTPEQTQLHASPTK. Composition is skewed to polar residues over residues 860 to 871 and 1151 to 1160; these read SQSDSKSLTSPI and SSQMMKTSLP.

This is an uncharacterized protein from Drosophila melanogaster (Fruit fly).